Consider the following 254-residue polypeptide: 3-deoxy-manno-octulosonate cytidylyltransferase (254 aa).

It belongs to the KdsB family.

Its subcellular location is the cytoplasm. The enzyme catalyses 3-deoxy-alpha-D-manno-oct-2-ulosonate + CTP = CMP-3-deoxy-beta-D-manno-octulosonate + diphosphate. It participates in nucleotide-sugar biosynthesis; CMP-3-deoxy-D-manno-octulosonate biosynthesis; CMP-3-deoxy-D-manno-octulosonate from 3-deoxy-D-manno-octulosonate and CTP: step 1/1. It functions in the pathway bacterial outer membrane biogenesis; lipopolysaccharide biosynthesis. Its function is as follows. Activates KDO (a required 8-carbon sugar) for incorporation into bacterial lipopolysaccharide in Gram-negative bacteria. The protein is 3-deoxy-manno-octulosonate cytidylyltransferase of Haemophilus influenzae (strain PittEE).